Here is a 677-residue protein sequence, read N- to C-terminus: NADPH--cytochrome P450 reductase (677 aa).

Residue G2 is modified to N-acetylglycine. Topologically, residues 2–21 (GDSHVDTSSTVSEAVAEEVS) are lumenal. A helical membrane pass occupies residues 22–42 (LFSMTDMILFSLIVGLLTYWF). Topologically, residues 43 to 677 (LFRKKKEEVP…KGRYSLDVWS (635 aa)) are cytoplasmic. Position 63 is a phosphoserine (S63). The region spanning 80-224 (IIVFYGSQTG…DFITWREQFW (145 aa)) is the Flavodoxin-like domain. FMN contacts are provided by residues 86 to 91 (SQTGTA), 138 to 141 (ATYG), 173 to 182 (LGNKTYEHFN), and D208. The FAD-binding FR-type domain maps to 279 to 521 (KNPFLAAVTT…FVRKSQFRLP (243 aa)). Position 298 (R298) interacts with NADP(+). Residues R424, 454–457 (RYYS), 472–474 (CAV), Y478, and 488–491 (GVAT) each bind FAD. Residues T535, 596–597 (SR), 602–606 (KVYVQ), and D638 contribute to the NADP(+) site. An FAD-binding site is contributed by W676.

The protein belongs to the NADPH--cytochrome P450 reductase family. It in the N-terminal section; belongs to the flavodoxin family. In the C-terminal section; belongs to the flavoprotein pyridine nucleotide cytochrome reductase family. It depends on FAD as a cofactor. FMN serves as cofactor.

The protein resides in the endoplasmic reticulum membrane. It carries out the reaction 2 oxidized [cytochrome P450] + NADPH = 2 reduced [cytochrome P450] + NADP(+) + H(+). In terms of biological role, this enzyme is required for electron transfer from NADP to cytochrome P450 in microsomes. It can also provide electron transfer to heme oxygenase and cytochrome B5. The chain is NADPH--cytochrome P450 reductase from Homo sapiens (Human).